A 490-amino-acid polypeptide reads, in one-letter code: UDP-N-acetylmuramoyl-L-alanyl-D-glutamate--2,6-diaminopimelate ligase (490 aa).

Serine 31 provides a ligand contact to UDP-N-acetyl-alpha-D-muramoyl-L-alanyl-D-glutamate. 109–115 (GTNGKTS) serves as a coordination point for ATP. UDP-N-acetyl-alpha-D-muramoyl-L-alanyl-D-glutamate contacts are provided by residues asparagine 150, 151–152 (TT), serine 178, and arginine 186. Lysine 218 is subject to N6-carboxylysine. Meso-2,6-diaminopimelate-binding positions include arginine 384, 408–411 (DNPR), glycine 458, and glutamate 462. Positions 408–411 (DNPR) match the Meso-diaminopimelate recognition motif motif.

Belongs to the MurCDEF family. MurE subfamily. Requires Mg(2+) as cofactor. In terms of processing, carboxylation is probably crucial for Mg(2+) binding and, consequently, for the gamma-phosphate positioning of ATP.

It is found in the cytoplasm. The enzyme catalyses UDP-N-acetyl-alpha-D-muramoyl-L-alanyl-D-glutamate + meso-2,6-diaminopimelate + ATP = UDP-N-acetyl-alpha-D-muramoyl-L-alanyl-gamma-D-glutamyl-meso-2,6-diaminopimelate + ADP + phosphate + H(+). Its pathway is cell wall biogenesis; peptidoglycan biosynthesis. Functionally, catalyzes the addition of meso-diaminopimelic acid to the nucleotide precursor UDP-N-acetylmuramoyl-L-alanyl-D-glutamate (UMAG) in the biosynthesis of bacterial cell-wall peptidoglycan. The sequence is that of UDP-N-acetylmuramoyl-L-alanyl-D-glutamate--2,6-diaminopimelate ligase from Bacillus velezensis (strain DSM 23117 / BGSC 10A6 / LMG 26770 / FZB42) (Bacillus amyloliquefaciens subsp. plantarum).